The sequence spans 341 residues: Protein RecA, plasmid (341 aa).

80 to 87 (GAESSGKT) is a binding site for ATP.

Belongs to the RecA family.

The protein localises to the cytoplasm. Can catalyze the hydrolysis of ATP in the presence of single-stranded DNA, the ATP-dependent uptake of single-stranded DNA by duplex DNA, and the ATP-dependent hybridization of homologous single-stranded DNAs. It interacts with LexA causing its activation and leading to its autocatalytic cleavage. The chain is Protein RecA, plasmid from Lactococcus lactis subsp. lactis (Streptococcus lactis).